Consider the following 154-residue polypeptide: Avirulence protein ATR13 (154 aa).

Positions 1–19 are cleaved as a signal peptide; it reads MRLVHAVLLPGIIVFVSNG. A RxLR motif is present at residues 38 to 41; sequence RQLR. The segment at 50-92 is leucine heptad repeat region; the sequence is LSRASFGLGKAQDPLDKFFSKIIFSGKPIETSYSAKGIHEKII. The single repeat region stretch occupies residues 93 to 103; that stretch reads EAHDLHVSKSK. A highly variable C-terminus domain region spans residues 104 to 154; the sequence is NAPIQYASVMEYLKKTYPGPDIERIVSTLERHDEVGAKDLGAKLRDALDRQ.

The protein belongs to the RxLR effector family.

The protein resides in the secreted. Its subcellular location is the host cytoplasm. In terms of biological role, secreted effector that acts as an elicitor of hypersensitive response (HR) specifically on plants carrying defense protein RPP13. Recognition of ATR13 by RPP13 initiates defense responses that are effective against oomycete, bacterial and viral pathogens. The allele ATR13-Emco5 recognizes RPP13-Nd, the RPP13 defense protein from Arabidopsis thaliana ecotype Niederzenz. The sequence is that of Avirulence protein ATR13 from Hyaloperonospora arabidopsidis (Peronospora arabidopsidis).